Consider the following 101-residue polypeptide: Apolipoprotein C-II (101 aa).

The first 26 residues, 1–26, serve as a signal peptide directing secretion; the sequence is MGTRYFLALFLILLVLGFKVQGVAMA. The lipid binding stretch occupies residues 66–74; sequence TMDEKIRDI. The tract at residues 78–101 is lipoprotein lipase cofactor; it reads STAAVTTYAGIFTDQLLSLLKGDQ.

This sequence belongs to the apolipoprotein C2 family. Proapolipoprotein C-II is synthesized as a sialic acid containing glycoprotein which is subsequently desialylated prior to its proteolytic processing. In terms of processing, proapolipoprotein C-II undergoes proteolytic cleavage of its N-terminal hexapeptide to generate apolipoprotein C-II. In bovine, proapolipoprotein C-II was found to be the minor form whereas apolipoprotein C-II was found to be the major form in plasma.

Its subcellular location is the secreted. Functionally, component of chylomicrons, very low-density lipoproteins (VLDL), low-density lipoproteins (LDL), and high-density lipoproteins (HDL) in plasma. Plays an important role in lipoprotein metabolism as an activator of lipoprotein lipase. Both proapolipoprotein C-II and apolipoprotein C-II can activate lipoprotein lipase. The sequence is that of Apolipoprotein C-II (APOC2) from Camelus dromedarius (Dromedary).